Reading from the N-terminus, the 205-residue chain is Protein N-terminal glutamine amidohydrolase (205 aa).

Catalysis depends on residues Cys-20, His-74, and Asp-90.

The protein belongs to the NTAQ1 family. In terms of assembly, monomer.

The catalysed reaction is N-terminal L-glutaminyl-[protein] + H2O = N-terminal L-glutamyl-[protein] + NH4(+). Mediates the side-chain deamidation of N-terminal glutamine residues to glutamate, an important step in N-end rule pathway of protein degradation. Conversion of the resulting N-terminal glutamine to glutamate renders the protein susceptible to arginylation, polyubiquitination and degradation as specified by the N-end rule. Does not act on substrates with internal or C-terminal glutamine and does not act on non-glutamine residues in any position. In Drosophila erecta (Fruit fly), this protein is Protein N-terminal glutamine amidohydrolase (tun).